The following is a 171-amino-acid chain: ATP synthase subunit b (171 aa).

The chain crosses the membrane as a helical span at residues 3-23 (KFLFFIFVFVGISFAGDDTAT).

It belongs to the ATPase B chain family. F-type ATPases have 2 components, F(1) - the catalytic core - and F(0) - the membrane proton channel. F(1) has five subunits: alpha(3), beta(3), gamma(1), delta(1), epsilon(1). F(0) has three main subunits: a(1), b(2) and c(10-14). The alpha and beta chains form an alternating ring which encloses part of the gamma chain. F(1) is attached to F(0) by a central stalk formed by the gamma and epsilon chains, while a peripheral stalk is formed by the delta and b chains.

Its subcellular location is the cell inner membrane. Functionally, f(1)F(0) ATP synthase produces ATP from ADP in the presence of a proton or sodium gradient. F-type ATPases consist of two structural domains, F(1) containing the extramembraneous catalytic core and F(0) containing the membrane proton channel, linked together by a central stalk and a peripheral stalk. During catalysis, ATP synthesis in the catalytic domain of F(1) is coupled via a rotary mechanism of the central stalk subunits to proton translocation. In terms of biological role, component of the F(0) channel, it forms part of the peripheral stalk, linking F(1) to F(0). This is ATP synthase subunit b from Campylobacter hominis (strain ATCC BAA-381 / DSM 21671 / CCUG 45161 / LMG 19568 / NCTC 13146 / CH001A).